Reading from the N-terminus, the 65-residue chain is Large ribosomal subunit protein bL33c (65 aa).

This sequence belongs to the bacterial ribosomal protein bL33 family.

It is found in the plastid. It localises to the chloroplast. In Marchantia polymorpha (Common liverwort), this protein is Large ribosomal subunit protein bL33c (rpl33).